The chain runs to 177 residues: Large ribosomal subunit protein uL6 (177 aa).

The protein belongs to the universal ribosomal protein uL6 family. As to quaternary structure, part of the 50S ribosomal subunit.

In terms of biological role, this protein binds to the 23S rRNA, and is important in its secondary structure. It is located near the subunit interface in the base of the L7/L12 stalk, and near the tRNA binding site of the peptidyltransferase center. This Shewanella denitrificans (strain OS217 / ATCC BAA-1090 / DSM 15013) protein is Large ribosomal subunit protein uL6.